The primary structure comprises 108 residues: Mitochondrial pyruvate carrier 3 (108 aa).

Transmembrane regions (helical) follow at residues Ile-19–Ile-35, Ile-51–Ile-67, and Leu-74–Thr-90.

Belongs to the mitochondrial pyruvate carrier (MPC) (TC 2.A.105) family. As to expression, abundant in leaf and particularly in the guard cells.

The protein resides in the mitochondrion. It is found in the mitochondrion inner membrane. In terms of biological role, mediates the uptake of pyruvate into mitochondria. Negatively regulates ABA-induced guard cell signaling and mediates drought stress responses. The chain is Mitochondrial pyruvate carrier 3 from Arabidopsis thaliana (Mouse-ear cress).